A 273-amino-acid polypeptide reads, in one-letter code: DNA repair protein RecO (273 aa).

The interval 249 to 273 is disordered; that stretch reads GRSLTEEPELKAEQTEAEKESQRPR. The span at 252 to 273 shows a compositional bias: basic and acidic residues; sequence LTEEPELKAEQTEAEKESQRPR.

This sequence belongs to the RecO family.

Its function is as follows. Involved in DNA repair and RecF pathway recombination. This chain is DNA repair protein RecO, found in Heliobacterium modesticaldum (strain ATCC 51547 / Ice1).